The sequence spans 368 residues: Lipoyl synthase, chloroplastic (368 aa).

Disordered regions lie at residues 1–30 (MQSS…RGSV) and 42–61 (PTVG…RDPE). [4Fe-4S] cluster is bound by residues Cys-94, Cys-99, Cys-105, Cys-131, Cys-135, Cys-138, and Ser-346. A Radical SAM core domain is found at 114–335 (GEGDGIATAT…KEYGESVGFR (222 aa)).

It belongs to the radical SAM superfamily. Lipoyl synthase family. It depends on [4Fe-4S] cluster as a cofactor.

It localises to the plastid. The protein localises to the chloroplast. The enzyme catalyses [[Fe-S] cluster scaffold protein carrying a second [4Fe-4S](2+) cluster] + N(6)-octanoyl-L-lysyl-[protein] + 2 oxidized [2Fe-2S]-[ferredoxin] + 2 S-adenosyl-L-methionine + 4 H(+) = [[Fe-S] cluster scaffold protein] + N(6)-[(R)-dihydrolipoyl]-L-lysyl-[protein] + 4 Fe(3+) + 2 hydrogen sulfide + 2 5'-deoxyadenosine + 2 L-methionine + 2 reduced [2Fe-2S]-[ferredoxin]. The protein operates within protein modification; protein lipoylation via endogenous pathway; protein N(6)-(lipoyl)lysine from octanoyl-[acyl-carrier-protein]: step 2/2. In terms of biological role, catalyzes the radical-mediated insertion of two sulfur atoms into the C-6 and C-8 positions of the octanoyl moiety bound to the lipoyl domains of lipoate-dependent enzymes, thereby converting the octanoylated domains into lipoylated derivatives. This Sorghum bicolor (Sorghum) protein is Lipoyl synthase, chloroplastic.